Here is a 183-residue protein sequence, read N- to C-terminus: Inner membrane-spanning protein YciB (183 aa).

5 helical membrane-spanning segments follow: residues 19 to 39 (LYGV…QLIV), 53 to 73 (IMGI…DLNF), 76 to 96 (WKVT…QFVF), 121 to 141 (LGWA…SYYF), and 151 to 171 (TFGF…YLYP).

This sequence belongs to the YciB family.

It is found in the cell inner membrane. Functionally, plays a role in cell envelope biogenesis, maintenance of cell envelope integrity and membrane homeostasis. The protein is Inner membrane-spanning protein YciB of Actinobacillus pleuropneumoniae serotype 7 (strain AP76).